The sequence spans 887 residues: DNA mismatch repair protein MutS (887 aa).

An ATP-binding site is contributed by 602-609 (GPNMSGKS).

This sequence belongs to the DNA mismatch repair MutS family.

This protein is involved in the repair of mismatches in DNA. It is possible that it carries out the mismatch recognition step. This protein has a weak ATPase activity. The chain is DNA mismatch repair protein MutS from Staphylococcus saprophyticus subsp. saprophyticus (strain ATCC 15305 / DSM 20229 / NCIMB 8711 / NCTC 7292 / S-41).